The sequence spans 427 residues: Serine hydroxymethyltransferase (427 aa).

Residues Leu127 and 131–133 (GHL) each bind (6S)-5,6,7,8-tetrahydrofolate. An N6-(pyridoxal phosphate)lysine modification is found at Lys236.

It belongs to the SHMT family. As to quaternary structure, homodimer. Pyridoxal 5'-phosphate is required as a cofactor.

It localises to the cytoplasm. It carries out the reaction (6R)-5,10-methylene-5,6,7,8-tetrahydrofolate + glycine + H2O = (6S)-5,6,7,8-tetrahydrofolate + L-serine. Its pathway is one-carbon metabolism; tetrahydrofolate interconversion. The protein operates within amino-acid biosynthesis; glycine biosynthesis; glycine from L-serine: step 1/1. Functionally, catalyzes the reversible interconversion of serine and glycine with tetrahydrofolate (THF) serving as the one-carbon carrier. This reaction serves as the major source of one-carbon groups required for the biosynthesis of purines, thymidylate, methionine, and other important biomolecules. Also exhibits THF-independent aldolase activity toward beta-hydroxyamino acids, producing glycine and aldehydes, via a retro-aldol mechanism. The protein is Serine hydroxymethyltransferase of Paramagnetospirillum magneticum (strain ATCC 700264 / AMB-1) (Magnetospirillum magneticum).